The sequence spans 372 residues: Neutral protease 2 homolog MGYG_06241 (372 aa).

A signal peptide spans 1–19; the sequence is MQFFTAIAAISALVAPALA. Residues 20-188 constitute a propeptide that is removed on maturation; the sequence is LPTQELPQAP…THFAGTLNRR (169 aa). Disulfide bonds link Cys-195–Cys-264 and Cys-271–Cys-289. Residue His-313 participates in Zn(2+) binding. Glu-314 is a catalytic residue. Positions 317 and 328 each coordinate Zn(2+).

Belongs to the peptidase M35 family. Zn(2+) serves as cofactor.

It localises to the secreted. It catalyses the reaction Preferential cleavage of bonds with hydrophobic residues in P1'. Also 3-Asn-|-Gln-4 and 8-Gly-|-Ser-9 bonds in insulin B chain.. Functionally, secreted metalloproteinase that allows assimilation of proteinaceous substrates. Shows high activities on basic nuclear substrates such as histone and protamine. May be involved in virulence. This is Neutral protease 2 homolog MGYG_06241 from Arthroderma gypseum (strain ATCC MYA-4604 / CBS 118893) (Microsporum gypseum).